We begin with the raw amino-acid sequence, 332 residues long: Adenosine receptor A2b (332 aa).

The Extracellular portion of the chain corresponds to 1–8; the sequence is MQLETQDA. Residues 9–33 form a helical membrane-spanning segment; sequence LYVALELAIAALSVAGNVLVCAAVG. Topologically, residues 34–43 are cytoplasmic; the sequence is TSSALQTPTN. A helical transmembrane segment spans residues 44-67; the sequence is YFLVSLAAADVAVGLFAIPFAITI. The Extracellular portion of the chain corresponds to 68–78; that stretch reads SLGFCTDFHSC. Cysteine 78 and cysteine 170 are oxidised to a cystine. The helical transmembrane segment at 79–101 threads the bilayer; that stretch reads LFLACFVLVLTQSSIFSLLAVAV. At 102–121 the chain is on the cytoplasmic side; it reads DRYLAIRVPLRYKSLVTGTR. Residues 122-144 form a helical membrane-spanning segment; it reads ARGVIAVLWVLAFGIGLTPFLGW. The Extracellular segment spans residues 145–177; sequence NSKDSATNCTEPWDGTTNESCCLVKCLFENVVP. N-linked (GlcNAc...) asparagine glycosylation is found at asparagine 152 and asparagine 162. Glutamate 173 lines the adenosine pocket. The helical transmembrane segment at 178-202 threads the bilayer; it reads MSYMVYFNFFGCVLPPLLIMLVIYI. Residues 203–234 lie on the Cytoplasmic side of the membrane; sequence KIFMVACKQLQRTELVDHSRTVIQREIHAAKS. Residues 235–258 traverse the membrane as a helical segment; sequence LAMIVGIFALCWLPVHAINCVTLF. Asparagine 253 contacts adenosine. Residues 259–266 are Extracellular-facing; sequence QPARAKDK. The chain crosses the membrane as a helical span at residues 267-290; sequence PKWAMNMAILLSHASSVVNPIVYA. Adenosine-binding residues include serine 278 and histidine 279. Residues 291–332 are Cytoplasmic-facing; that stretch reads YRNRDFRYTFHKIISRYVLCQTDVLKSGNGQAGTQSALDVGL. Cysteine 310 is lipidated: S-palmitoyl cysteine.

This sequence belongs to the G-protein coupled receptor 1 family.

The protein localises to the cell membrane. Functionally, receptor for adenosine. The activity of this receptor is mediated by G proteins which activate adenylyl cyclase. The protein is Adenosine receptor A2b (ADORA2B) of Canis lupus familiaris (Dog).